The chain runs to 35 residues: MSDIN-like toxin proprotein 6 (35 aa).

Positions 1 to 10 (MSDINTTRLP) are excised as a propeptide. A cross-link (cyclopeptide (Phe-Pro)) is located at residues 11–18 (FVFVASPP). A propeptide spanning residues 19 to 35 (CVGDDIAMVLTRGENLC) is cleaved from the precursor.

The protein belongs to the MSDIN fungal toxin family. In terms of processing, processed by the macrocyclase-peptidase enzyme POPB to yield a toxic cyclic octapeptide. POPB first removes 10 residues from the N-terminus. Conformational trapping of the remaining peptide forces the enzyme to release this intermediate rather than proceed to macrocyclization. The enzyme rebinds the remaining peptide in a different conformation and catalyzes macrocyclization of the N-terminal 8 residues. In terms of tissue distribution, expressed in basidiocarps.

Functionally, probable toxin that belongs to the MSDIN-like toxin family responsible for a large number of food poisoning cases and deaths. This chain is MSDIN-like toxin proprotein 6, found in Amanita exitialis (Guangzhou destroying angel).